Here is a 479-residue protein sequence, read N- to C-terminus: GTPase Der (479 aa).

2 EngA-type G domains span residues 3–167 and 191–366; these read FTLA…EAAA and LQIA…ATWN. GTP is bound by residues 9-16, 56-60, 119-122, 197-204, 244-248, and 309-312; these read GRPNVGKS, DTAGL, NKAE, GRPNAGKS, DTAGM, and NKWD. The KH-like domain maps to 367-453; the sequence is TRISTARLNQ…RLWMRSQADD (87 aa). Residues 449–479 are disordered; sequence SQADDNPYKNRKKSTPSRLNKHVRKGETKKG. A compositionally biased stretch (basic residues) spans 457–472; it reads KNRKKSTPSRLNKHVR.

It belongs to the TRAFAC class TrmE-Era-EngA-EngB-Septin-like GTPase superfamily. EngA (Der) GTPase family. Associates with the 50S ribosomal subunit.

GTPase that plays an essential role in the late steps of ribosome biogenesis. The polypeptide is GTPase Der (Jannaschia sp. (strain CCS1)).